We begin with the raw amino-acid sequence, 339 residues long: Transcription initiation factor IIB (339 aa).

A TFIIB-type zinc finger spans residues 39–70; that stretch reads EELICPVCGSKNIIKDYERAEIVCEMCGCVLQ. Positions 43, 46, 62, and 65 each coordinate Zn(2+). 2 consecutive repeat copies span residues 156–239 and 250–331.

It belongs to the TFIIB family.

In terms of biological role, stabilizes TBP binding to an archaeal box-A promoter. Also responsible for recruiting RNA polymerase II to the pre-initiation complex (DNA-TBP-TFIIB). The protein is Transcription initiation factor IIB of Methanococcus maripaludis (strain C6 / ATCC BAA-1332).